A 1386-amino-acid polypeptide reads, in one-letter code: MPDPNELNANQSSLSRFAFNIYGALNQAQSLEGNSSASPTPSMNPKQHNKSGTSSSNKEKLVYNCEREVSCISQFNHSLNGLVKNYEEDPLHHLIIGGKNYLKLLAMNNDQTKIVHEVDILESSKSIYSSSRTLSSNKLTSVNTIESQHDTIACELATGLISVYKVQNNGKCKLVRKYSDHIRCVNSLDFINQSNVANSSSPYQLISGSQDGTIKLWDLRSASNKPTLTISSNSHSDPVRSCQYSPHSTVRNKLTILSVHDSGALCKYDLRSPNGGYQHNINVPERKWNFHTGPALSLNIHPEKEYVITGGRDQKVCIWNYGDSPTHQNKISPDYMINTYGPVMKIRWSVYPDNIPSKTDTSSSQYQQILESKRYDDKTSSNERETISTMSSVGKNDPLFNYDFACSFLNEDPTISIYNLKRKYIPKEVISSNSNKPFQNFMWAQNISHSRRVWTISKSNQFMSYDLDTAQSDPNIIKPLDNLTSVSMAWNSGLGDFCFVNQEKDEFESISQLENDSFRSESEEYDPEFALASDGSGLASNSGMEDHPTDERSLKYRISSNSLDNSSIYNNHSKITVASIPIASNASNTPLSYQNPSFSNSVSPPFEQTTKPSLHRSATHNPMIQPPKPLSSILQNRSSVGIEALMEHGNNNSGSNSASVSGNHLRPTLNRNHSQSTQGSNVSLSSSIQGYQAPPPVSKRVISVNHPSPYIVPLSLPLPQNDEHAFEILSNNYLITVNDGLSLIDVCLYNANIAAGVNKFRDCQTWRVLAVSLEEDKFSLINYEENIRSQFEKAETAITYGSLDTYENNSNTSNSKTQLNQTNDNRSILSELDNFVGSFNSNSTSTSNYGGVHSEKDTSNNIELSNANNNGSRKASFSEIKPLSNLNSPSHLKDVLNQSRSNSNSPVISRSNSMLLKNRKTINTGSTRAENHESAIDDDDGMGNAKTCELNENDSQFGMKNSELKKHSSMSAIDSEAIDNDFPYNIESAKASPIKIGSQHKHEKNTTSGSMSPQNKDSNHRGNIINYQRRLSLDPENSRKNSRNAFNYRHTNTWDLDDENSNIIGNRAQWATNSSLSSCGVSSYQPRIGSPNYSDQLHHSYSSTHSSPRPYYNSTTPGSSRRNSHISPVHGFHNKTSYAKQSPVSQKLMRDEQSRTELKDVQEQIEDLESIEETKVTSVNFGKSELTRAITGNNTGSPNTLYKPWKTEYLLKEALEFASLQGDILLCSILTILFYDYLKVGKDSHVFSKEQSLDWLSLYVEILHRKQLFSNAMYVVNMAPKELLPDLANLASTEVNLRFFCCWCQKLLVNEKSKRKALNEDSFGYWYCDECSTKQSNCIYCDEPCKGLNIVTSLSCGHRGHFGCLREWFIDQENIVCPGGCDEQVI.

Residues 31–56 show a composition bias toward polar residues; sequence LEGNSSASPTPSMNPKQHNKSGTSSS. The tract at residues 31 to 58 is disordered; the sequence is LEGNSSASPTPSMNPKQHNKSGTSSSNK. 4 WD repeats span residues 180-227, 234-278, 290-329, and 382-428; these read DHIR…NKPT, SHSD…GGYQ, FHTG…THQN, and NERE…IPKE. Composition is skewed to low complexity over residues 595–606 and 649–663; these read NPSFSNSVSPPF and GNNN…VSGN. 5 disordered regions span residues 595–629, 647–691, 844–958, 991–1021, and 1090–1157; these read NPSF…PPKP, EHGN…IQGY, TSTS…SQFG, ASPI…SNHR, and SPNY…SRTE. Positions 669 to 690 are enriched in polar residues; it reads LNRNHSQSTQGSNVSLSSSIQG. Residues 859-872 are compositionally biased toward low complexity; that stretch reads SNNIELSNANNNGS. Polar residues-rich tracts occupy residues 884-928, 1006-1016, 1090-1121, and 1134-1145; these read SNLN…GSTR, TTSGSMSPQNK, SPNY…GSSR, and NKTSYAKQSPVS. The segment covering 1148-1157 has biased composition (basic and acidic residues); the sequence is LMRDEQSRTE. The stretch at 1171–1212 is one WD 5 repeat; that stretch reads IEETKVTSVNFGKSELTRAITGNNTGSPNTLYKPWKTEYLLK. The segment at 1338–1381 adopts an RING-type; degenerate zinc-finger fold; sequence CIYCDEPCKGLNIVTSLSCGHRGHFGCLREWFIDQENIVCPGGC.

Belongs to the WD repeat RTC1 family.

Its subcellular location is the vacuole. May be involved in a process influencing telomere capping. This is Restriction of telomere capping protein 1 (RTC1) from Debaryomyces hansenii (strain ATCC 36239 / CBS 767 / BCRC 21394 / JCM 1990 / NBRC 0083 / IGC 2968) (Yeast).